We begin with the raw amino-acid sequence, 233 residues long: ATP-dependent Clp protease proteolytic subunit 1 (233 aa).

The active-site Nucleophile is the S116. H141 is a catalytic residue.

It belongs to the peptidase S14 family. In terms of assembly, fourteen ClpP subunits assemble into 2 heptameric rings which stack back to back to give a disk-like structure with a central cavity, resembling the structure of eukaryotic proteasomes.

It is found in the cytoplasm. The catalysed reaction is Hydrolysis of proteins to small peptides in the presence of ATP and magnesium. alpha-casein is the usual test substrate. In the absence of ATP, only oligopeptides shorter than five residues are hydrolyzed (such as succinyl-Leu-Tyr-|-NHMec, and Leu-Tyr-Leu-|-Tyr-Trp, in which cleavage of the -Tyr-|-Leu- and -Tyr-|-Trp bonds also occurs).. Its function is as follows. Cleaves peptides in various proteins in a process that requires ATP hydrolysis. Has a chymotrypsin-like activity. Plays a major role in the degradation of misfolded proteins. The sequence is that of ATP-dependent Clp protease proteolytic subunit 1 from Salinibacter ruber (strain DSM 13855 / M31).